The following is a 424-amino-acid chain: Serine--tRNA ligase (424 aa).

Position 231-233 (231-233) interacts with L-serine; that stretch reads TAE. 262–264 serves as a coordination point for ATP; sequence RAE. E285 contributes to the L-serine binding site. ATP is bound at residue 349–352; the sequence is EISS. Residue S385 coordinates L-serine.

The protein belongs to the class-II aminoacyl-tRNA synthetase family. Type-1 seryl-tRNA synthetase subfamily. In terms of assembly, homodimer. The tRNA molecule binds across the dimer.

It is found in the cytoplasm. It catalyses the reaction tRNA(Ser) + L-serine + ATP = L-seryl-tRNA(Ser) + AMP + diphosphate + H(+). The catalysed reaction is tRNA(Sec) + L-serine + ATP = L-seryl-tRNA(Sec) + AMP + diphosphate + H(+). The protein operates within aminoacyl-tRNA biosynthesis; selenocysteinyl-tRNA(Sec) biosynthesis; L-seryl-tRNA(Sec) from L-serine and tRNA(Sec): step 1/1. Its function is as follows. Catalyzes the attachment of serine to tRNA(Ser). Is also able to aminoacylate tRNA(Sec) with serine, to form the misacylated tRNA L-seryl-tRNA(Sec), which will be further converted into selenocysteinyl-tRNA(Sec). The protein is Serine--tRNA ligase of Geobacillus thermodenitrificans (strain NG80-2).